A 205-amino-acid chain; its full sequence is uncharacterized protein (205 aa).

Residues 11–71 enclose the HTH tetR-type domain; the sequence is DKRQAEILEA…RIIETGLDEG (61 aa). A DNA-binding region (H-T-H motif) is located at residues 34-53; it reads TMKDVVEESGFSRGGVYLYF.

This is an uncharacterized protein from Bacillus subtilis (strain 168).